The chain runs to 440 residues: 5-methylthioadenosine/S-adenosylhomocysteine deaminase (440 aa).

The Zn(2+) site is built by H69 and H71. Substrate contacts are provided by E98 and H190. H217 lines the Zn(2+) pocket. Substrate-binding residues include E220 and D305. D305 lines the Zn(2+) pocket.

It belongs to the metallo-dependent hydrolases superfamily. MTA/SAH deaminase family. The cofactor is Zn(2+).

It carries out the reaction S-adenosyl-L-homocysteine + H2O + H(+) = S-inosyl-L-homocysteine + NH4(+). The enzyme catalyses S-methyl-5'-thioadenosine + H2O + H(+) = S-methyl-5'-thioinosine + NH4(+). In terms of biological role, catalyzes the deamination of 5-methylthioadenosine and S-adenosyl-L-homocysteine into 5-methylthioinosine and S-inosyl-L-homocysteine, respectively. Is also able to deaminate adenosine. This chain is 5-methylthioadenosine/S-adenosylhomocysteine deaminase, found in Desulfovibrio desulfuricans (strain ATCC 27774 / DSM 6949 / MB).